Consider the following 676-residue polypeptide: Probable metal-nicotianamine transporter YSL6 (676 aa).

13 helical membrane-spanning segments follow: residues 38 to 58, 62 to 82, 110 to 130, 154 to 174, 276 to 296, 321 to 341, 392 to 412, 413 to 433, 452 to 472, 510 to 530, 561 to 581, 604 to 624, and 639 to 659; these read ITIR…IITH, LTVG…FFFV, CVVA…LIAM, GLWW…FSLV, IVNC…WPFV, VFIA…KIIA, FAIA…PIIF, PPLK…LAFC, IGLF…AGLA, VGTA…WTAF, LPKH…IVNL, FYIG…LFVW, and VASG…ILSI.

This sequence belongs to the YSL (TC 2.A.67.2) family.

Its subcellular location is the membrane. Functionally, may be involved in the transport of nicotianamine-chelated metals. The sequence is that of Probable metal-nicotianamine transporter YSL6 (YSL6) from Arabidopsis thaliana (Mouse-ear cress).